The following is a 338-amino-acid chain: MYSLNWPRAYGIPNSTATFKLCPEDFQVNELFEGQFSGEGEHIVLKIEKKGLTTEQVIKSLARLINKPIKLISYAGLKDKQALTTQWLSIHAPGEVIEGIETLEAPGWKILECTRHNKKLRPGFLSGNHFTITLRNVSDESDLIHRIEQIKFKGVPNYFGEQRFGRDGGNLIKAEEILVQGRKVKDRFLKGMYFSAARSWLYNLILSRRVKESSWNLPLLGDVIQLVGSNSIFVNDKSLDEQLLQRIGEKDVSPASPLPGRSKNLVKGTALQIINEVYAEWSAWLDGLEKNGLEEAWRANILYAEQIEYRINQGTVELSFVLPAGAYATVVLRELVQY.

Residue Asp-79 is the Nucleophile of the active site. Positions 154–303 (GVPNYFGEQR…EEAWRANILY (150 aa)) constitute a TRUD domain.

The protein belongs to the pseudouridine synthase TruD family.

It carries out the reaction uridine(13) in tRNA = pseudouridine(13) in tRNA. Responsible for synthesis of pseudouridine from uracil-13 in transfer RNAs. This Legionella pneumophila (strain Lens) protein is tRNA pseudouridine synthase D.